The following is an 850-amino-acid chain: Trimethylamine-N-oxide reductase (850 aa).

A signal peptide (tat-type signal) is located at residues 1–39; it reads MKNKDSLHVSRRRFLAQLGGLTVAGMLGPSLLTPRSARA. Position 191 (serine 191) interacts with Mo-bis(molybdopterin guanine dinucleotide).

This sequence belongs to the prokaryotic molybdopterin-containing oxidoreductase family. It depends on Mo-bis(molybdopterin guanine dinucleotide) as a cofactor. In terms of processing, predicted to be exported by the Tat system. The position of the signal peptide cleavage has not been experimentally proven.

The protein localises to the periplasm. The catalysed reaction is trimethylamine + 2 Fe(III)-[cytochrome c] + H2O = trimethylamine N-oxide + 2 Fe(II)-[cytochrome c] + 3 H(+). Reduces trimethylamine-N-oxide (TMAO) into trimethylamine; an anaerobic reaction coupled to energy-yielding reactions. This chain is Trimethylamine-N-oxide reductase (torA), found in Salmonella typhimurium (strain LT2 / SGSC1412 / ATCC 700720).